Here is a 3788-residue protein sequence, read N- to C-terminus: Lysosomal-trafficking regulator (3788 aa).

Disordered stretches follow at residues 148–180 and 198–217; these read KSTHRYSVRDARKTQLSTSDSEGNSDEKSTVVS and EGHLVAKPDPSATKEQVLSD. At Ser164 the chain carries Phosphoserine. Thr165 is modified (phosphothreonine). Residue Ser166 is modified to Phosphoserine. The WD 1 repeat unit spans residues 662–700; sequence GPTSGLPSPSYRFQGILPSSGSEDLLWKWDALEAYQSFV. Disordered regions lie at residues 1169-1196, 1213-1240, and 1482-1519; these read LGPGDAVTEKSHPSEEELLSQPGDFSEE, GYEADSESNPEDVDTQDDGVELNPEAEG, and ESAAERGKRVKKRNKPSVLEDSSFEGAEGDRPEVTESI. The span at 1213-1232 shows a compositional bias: acidic residues; sequence GYEADSESNPEDVDTQDDGV. 2 positions are modified to phosphoserine: Ser1503 and Ser1504. A WD 2 repeat occupies 1576 to 1620; it reads SQENIFFPSKWQHLVLTYIQHPQGKKNVHGEISIWVSGQRKTDVI. A phosphoserine mark is found at Ser2099, Ser2118, Ser2203, Ser2207, and Ser2254. A disordered region spans residues 2177 to 2221; sequence ANGVSRGSPRFPRARVDHKDVGTEPRSDDDSPGDESYPRRPDNLK. The segment covering 2190 to 2205 has biased composition (basic and acidic residues); it reads ARVDHKDVGTEPRSDD. Disordered stretches follow at residues 2556 to 2581 and 2659 to 2681; these read HDSESPVHSPSAHRHSVPPKRRSIAG and NTSQSKTSVSQTEISEEDMHHEQ. Positions 2566 to 2578 are enriched in basic residues; it reads SAHRHSVPPKRRS. Residues 2659–2671 are compositionally biased toward polar residues; it reads NTSQSKTSVSQTE. The BEACH-type PH domain occupies 2996 to 3102; that stretch reads AASESIRVNR…VRDDVYQSIL (107 aa). The region spanning 3126–3409 is the BEACH domain; that stretch reads QITNFEYLTH…QLFHTAHASR (284 aa). WD repeat units follow at residues 3550-3589, 3601-3640, 3643-3686, 3687-3731, and 3736-3775; these read SQQHQVTSCAWVPDSCQLFTGSKCGVITAYTNRLTSSTPS, GHTEEITGLCVCKPYSVMISVSRDGTCIVWDLNRLCYVQS, GHKS…VGHV, HCRE…PVRE, and KSNKPIISLTFSCDGHHLYTANSEGTVIAWCRKDQQRVKL.

In terms of assembly, interacts with CPAP, LIP8 and ZNF521. Expressed in the heart, lung, liver, spleen, brain and in different immune cell types (purified B and T lymphocytes, bone marrow-derived macrophages and dendritic cells).

Its subcellular location is the cytoplasm. Its function is as follows. Adapter protein that regulates and/or fission of intracellular vesicles such as lysosomes. Might regulate trafficking of effectors involved in exocytosis. In cytotoxic T-cells and natural killer (NK) cells, has role in the regulation of size, number and exocytosis of lytic granules. In macrophages and dendritic cells, regulates phagosome maturation by controlling the conversion of early phagosomal compartments into late phagosomes. In macrophages and dendritic cells, specifically involved in TLR3- and TLR4-induced production of pro-inflammatory cytokines by regulating the endosomal TLR3- TICAM1/TRIF and TLR4- TICAM1/TRIF signaling pathways. This chain is Lysosomal-trafficking regulator (Lyst), found in Mus musculus (Mouse).